Here is a 152-residue protein sequence, read N- to C-terminus: Small ribosomal subunit protein uS15 (152 aa).

Belongs to the universal ribosomal protein uS15 family. Part of the 30S ribosomal subunit.

The sequence is that of Small ribosomal subunit protein uS15 from Methanospirillum hungatei JF-1 (strain ATCC 27890 / DSM 864 / NBRC 100397 / JF-1).